A 339-amino-acid chain; its full sequence is DNA-directed RNA polymerase subunit alpha (339 aa).

Positions 1–235 (MVIQKNWQEL…DQLQVFVNFE (235 aa)) are alpha N-terminal domain (alpha-NTD). The interval 251–339 (FNPALLKKVD…DLAKRFEEHY (89 aa)) is alpha C-terminal domain (alpha-CTD).

Belongs to the RNA polymerase alpha chain family. As to quaternary structure, homodimer. The RNAP catalytic core consists of 2 alpha, 1 beta, 1 beta' and 1 omega subunit. When a sigma factor is associated with the core the holoenzyme is formed, which can initiate transcription.

The enzyme catalyses RNA(n) + a ribonucleoside 5'-triphosphate = RNA(n+1) + diphosphate. Its function is as follows. DNA-dependent RNA polymerase catalyzes the transcription of DNA into RNA using the four ribonucleoside triphosphates as substrates. The polypeptide is DNA-directed RNA polymerase subunit alpha (Methylorubrum populi (strain ATCC BAA-705 / NCIMB 13946 / BJ001) (Methylobacterium populi)).